A 640-amino-acid chain; its full sequence is tRNA-dihydrouridine(47) synthase [NAD(P)(+)]-like (640 aa).

A compositionally biased stretch (low complexity) spans 1-10; it reads MAEVAEVAAE. Disordered stretches follow at residues 1–22 and 47–106; these read MAEVAEVAAESGGGGDSGVGAC and DKQE…PHMK. The residue at position 2 (Ala2) is an N-acetylalanine. Residues 64-91 show a composition bias toward basic and acidic residues; sequence PEAKRIRLEDGQENGKTEVAVESHERQV. Positions 92 to 106 are enriched in basic residues; it reads PKRARGQNKSRPHMK. 2 consecutive C3H1-type zinc fingers follow at residues 110–140 and 148–178; these read YDKERLCPSLLQESATPCAFGDRCRFLHDVG and ADLGPHCVLFNTFGRCPYSMTCRFAGAHLGP. Residue Ser267 is modified to Phosphoserine. Residues 301–303 and Gln355 contribute to the FMN site; that span reads PLT. Cys386 functions as the Proton donor in the catalytic mechanism. A Glycyl lysine isopeptide (Lys-Gly) (interchain with G-Cter in SUMO2) cross-link involves residue Lys406. FMN is bound by residues Lys425, His455, 487–489, and 510–511; these read NGD and AR.

Belongs to the Dus family. Dus3 subfamily. Requires FMN as cofactor.

The enzyme catalyses 5,6-dihydrouridine(47) in tRNA + NAD(+) = uridine(47) in tRNA + NADH + H(+). It catalyses the reaction 5,6-dihydrouridine(47) in tRNA + NADP(+) = uridine(47) in tRNA + NADPH + H(+). The catalysed reaction is a 5,6-dihydrouridine in mRNA + NAD(+) = a uridine in mRNA + NADH + H(+). It carries out the reaction a 5,6-dihydrouridine in mRNA + NADP(+) = a uridine in mRNA + NADPH + H(+). Catalyzes the synthesis of dihydrouridine, a modified base, in various RNAs, such as tRNAs, mRNAs and some long non-coding RNAs (lncRNAs). Mainly modifies the uridine in position 47 (U47) in the D-loop of most cytoplasmic tRNAs. Also able to mediate the formation of dihydrouridine in some mRNAs, thereby regulating their translation. This chain is tRNA-dihydrouridine(47) synthase [NAD(P)(+)]-like, found in Rattus norvegicus (Rat).